A 111-amino-acid polypeptide reads, in one-letter code: COX assembly mitochondrial protein (111 aa).

In terms of domain architecture, CHCH spans 39-82 (YKKCANFVQAMADCAKANGMKVFPTCDKQRDEMKSCLLFYQTDE). 2 short sequence motifs (cx9C motif) span residues 42-52 (CANFVQAMADC) and 64-74 (CDKQRDEMKSC). Disulfide bonds link Cys-42/Cys-74 and Cys-52/Cys-64.

Belongs to the CMC family.

The protein resides in the mitochondrion inner membrane. Functionally, required for mitochondrial cytochrome c oxidase (COX) assembly and respiration. Binds copper. May be involved in copper trafficking and distribution to mitochondrial COX and SOD1. This Saccharomyces cerevisiae (strain RM11-1a) (Baker's yeast) protein is COX assembly mitochondrial protein (CMC1).